The chain runs to 154 residues: UPF0260 protein NTHI1811 (154 aa).

This sequence belongs to the UPF0260 family.

The protein is UPF0260 protein NTHI1811 of Haemophilus influenzae (strain 86-028NP).